The chain runs to 106 residues: Large ribosomal subunit protein uL23 (106 aa).

This sequence belongs to the universal ribosomal protein uL23 family. As to quaternary structure, part of the 50S ribosomal subunit. Contacts protein L29, and trigger factor when it is bound to the ribosome.

One of the early assembly proteins it binds 23S rRNA. One of the proteins that surrounds the polypeptide exit tunnel on the outside of the ribosome. Forms the main docking site for trigger factor binding to the ribosome. The sequence is that of Large ribosomal subunit protein uL23 from Acinetobacter baylyi (strain ATCC 33305 / BD413 / ADP1).